A 473-amino-acid polypeptide reads, in one-letter code: 3-isopropylmalate dehydratase large subunit (473 aa).

Residues C354, C414, and C417 each coordinate [4Fe-4S] cluster. Residues 425-448 form a disordered region; sequence LAPGQRSASTSNRNFEGRQGRGGR.

The protein belongs to the aconitase/IPM isomerase family. LeuC type 1 subfamily. In terms of assembly, heterodimer of LeuC and LeuD. [4Fe-4S] cluster serves as cofactor.

The enzyme catalyses (2R,3S)-3-isopropylmalate = (2S)-2-isopropylmalate. Its pathway is amino-acid biosynthesis; L-leucine biosynthesis; L-leucine from 3-methyl-2-oxobutanoate: step 2/4. In terms of biological role, catalyzes the isomerization between 2-isopropylmalate and 3-isopropylmalate, via the formation of 2-isopropylmaleate. In Acidothermus cellulolyticus (strain ATCC 43068 / DSM 8971 / 11B), this protein is 3-isopropylmalate dehydratase large subunit.